The chain runs to 325 residues: Lipid droplet-associated hydrolase (325 aa).

The active-site Nucleophile is the S139. Active-site charge relay system residues include D271 and H300.

Belongs to the AB hydrolase superfamily. LDAH family.

It localises to the lipid droplet. Its subcellular location is the endoplasmic reticulum. The enzyme catalyses a cholesterol ester + H2O = cholesterol + a fatty acid + H(+). Functionally, probable serine lipid hydrolase associated with lipid droplets. Has low cholesterol esterase activity. Appears to lack triglyceride lipase activity. Involved in cholesterol and triglyceride homeostasis; stimulates cellular triglyceride accumulation and cellular cholesterol release. Acts antagonistically with PNPLA2/ATGL in regulation of cellular lipid stores. May regulate triglyceride accumulation indirectly through stimulation of PNPLA2/ATGL ubiquitination and proteasomal degradation. Promotes microtubule-dependent lipid droplet fusion. Highly expressed in macrophage-rich areas in atherosclerotic lesions, suggesting that it could promote cholesterol ester turnover in macrophages. This chain is Lipid droplet-associated hydrolase, found in Pongo abelii (Sumatran orangutan).